The following is a 488-amino-acid chain: MTKNNEAGWNLDHSYTTLPQSFYTEIPPTPVSSPELVKLNHSLAISLGFNPEELKKEAEIAIFAGNALPEGAHPLAQAYAGHQFGHFNMLGDGRALLIGEQMTPSGKRFDIQLKGSGPTPYSRRGDGRAALGPMLREYIISEAMYALDIPTTRSLAVVTTGEPTYRETKLPGAILTRVASSHIRVGTFQYAAARGSIEDLQSLADYTIKRHYPEIEAHENRYTALLQEVIKKQASLIAKWQLVGFIHGVMNTDNITISGETIDYGPCAFMDNYDQGTVFSSIDTQGRYAYGNQPYMAAWDLARLAESLIPILHEDEEEVLKIAQDEISKFSVQYEKQWFLGMKKKLGLFSNEEQDQSLIEQLLKMMEKFKADYTNTFRSLTLNTIENTALFESPEFKEWYKLWQSRLERQEESKENAYEMMKNNNPSIIPRNHRVEEALEAAVTNGDYSVMEKLLEALSNPYAYATEQEEYCVPPVPTNRPYRTFCGT.

8 residues coordinate ATP: glycine 91, glycine 93, arginine 94, lysine 114, aspartate 126, glycine 127, arginine 177, and arginine 184. A disordered region spans residues 108–127; sequence RFDIQLKGSGPTPYSRRGDG. The Proton acceptor role is filled by aspartate 253. Residues asparagine 254 and aspartate 263 each coordinate Mg(2+). Aspartate 263 provides a ligand contact to ATP.

Belongs to the SELO family. Mg(2+) serves as cofactor. Mn(2+) is required as a cofactor.

It catalyses the reaction L-seryl-[protein] + ATP = 3-O-(5'-adenylyl)-L-seryl-[protein] + diphosphate. The enzyme catalyses L-threonyl-[protein] + ATP = 3-O-(5'-adenylyl)-L-threonyl-[protein] + diphosphate. The catalysed reaction is L-tyrosyl-[protein] + ATP = O-(5'-adenylyl)-L-tyrosyl-[protein] + diphosphate. It carries out the reaction L-histidyl-[protein] + UTP = N(tele)-(5'-uridylyl)-L-histidyl-[protein] + diphosphate. It catalyses the reaction L-seryl-[protein] + UTP = O-(5'-uridylyl)-L-seryl-[protein] + diphosphate. The enzyme catalyses L-tyrosyl-[protein] + UTP = O-(5'-uridylyl)-L-tyrosyl-[protein] + diphosphate. Its function is as follows. Nucleotidyltransferase involved in the post-translational modification of proteins. It can catalyze the addition of adenosine monophosphate (AMP) or uridine monophosphate (UMP) to a protein, resulting in modifications known as AMPylation and UMPylation. This chain is Protein nucleotidyltransferase YdiU, found in Bacillus anthracis (strain A0248).